The following is a 400-amino-acid chain: Tryptophan synthase beta chain (400 aa).

The residue at position 92 (K92) is an N6-(pyridoxal phosphate)lysine.

Belongs to the TrpB family. As to quaternary structure, tetramer of two alpha and two beta chains. Requires pyridoxal 5'-phosphate as cofactor.

It catalyses the reaction (1S,2R)-1-C-(indol-3-yl)glycerol 3-phosphate + L-serine = D-glyceraldehyde 3-phosphate + L-tryptophan + H2O. It participates in amino-acid biosynthesis; L-tryptophan biosynthesis; L-tryptophan from chorismate: step 5/5. In terms of biological role, the beta subunit is responsible for the synthesis of L-tryptophan from indole and L-serine. The sequence is that of Tryptophan synthase beta chain from Neisseria meningitidis serogroup A / serotype 4A (strain DSM 15465 / Z2491).